Here is a 344-residue protein sequence, read N- to C-terminus: MKVIKTAPLIPSEIKVLEKEGNRVKISLAPFEFGYAVTLAHPIRRLLLLSSVGYAPIGLKIEGVHHEFDSLRGVTEDVSLFIMNLKNIRFIAKALVGQDSSLENQSVVVDYSFKGSMELRARDLNSDHIEIVNPEMPLATINEDAQLNFSLIIYKGMGYVPSETTRELMPEGYMPLDGSFTPIKKVVYEIENVLVEGDPNYEKIIFDIETDGQIDPYKAFLSAVKVMSKQLGVFGERPIANTEYSGDYAQRDDAKDLSAKIESMNLSARCFNCLDKIGIKYVGELVLMSEEELKGVKNMGKKSYDEIAEKLNDLGYPVGTELSPEQRESLKKRLEKLEDKGGND.

The segment at 1-238 (MKVIKTAPLI…KQLGVFGERP (238 aa)) is alpha N-terminal domain (alpha-NTD). Residues 253–344 (DAKDLSAKIE…EKLEDKGGND (92 aa)) form an alpha C-terminal domain (alpha-CTD) region.

Belongs to the RNA polymerase alpha chain family. Homodimer. The RNAP catalytic core consists of 2 alpha, 1 beta, 1 beta' and 1 omega subunit. When a sigma factor is associated with the core the holoenzyme is formed, which can initiate transcription.

It catalyses the reaction RNA(n) + a ribonucleoside 5'-triphosphate = RNA(n+1) + diphosphate. DNA-dependent RNA polymerase catalyzes the transcription of DNA into RNA using the four ribonucleoside triphosphates as substrates. The sequence is that of DNA-directed RNA polymerase subunit alpha from Helicobacter pylori (strain HPAG1).